Here is a 472-residue protein sequence, read N- to C-terminus: Glutamate--tRNA ligase (472 aa).

The 'HIGH' region signature appears at 9 to 19 (PSPTGPLHIGS). The 'KMSKS' region motif lies at 237 to 241 (KLSKR). Residue lysine 240 participates in ATP binding.

It belongs to the class-I aminoacyl-tRNA synthetase family. Glutamate--tRNA ligase type 1 subfamily. Monomer.

The protein localises to the cytoplasm. The enzyme catalyses tRNA(Glu) + L-glutamate + ATP = L-glutamyl-tRNA(Glu) + AMP + diphosphate. In terms of biological role, catalyzes the attachment of glutamate to tRNA(Glu) in a two-step reaction: glutamate is first activated by ATP to form Glu-AMP and then transferred to the acceptor end of tRNA(Glu). The protein is Glutamate--tRNA ligase of Buchnera aphidicola subsp. Baizongia pistaciae (strain Bp).